We begin with the raw amino-acid sequence, 535 residues long: RNA-splicing ligase RtcB homolog 1 (535 aa).

Positions Met-1–Gln-16 are enriched in basic residues. The segment at Met-1–Ser-29 is disordered. Positions 152, 155, 260, 292, and 383 each coordinate Mn(2+). Asn-259–Glu-263 contacts GMP. GMP contacts are provided by residues His-383–Asn-384, Gly-432–Met-435, Ser-439, His-458–Gly-461, and Lys-534. His-458 (GMP-histidine intermediate) is an active-site residue.

Belongs to the RtcB family. Catalytic component of the tRNA-splicing ligase complex. It depends on Mn(2+) as a cofactor.

It carries out the reaction a 3'-end 3'-phospho-ribonucleotide-RNA + a 5'-end dephospho-ribonucleoside-RNA + GTP = a ribonucleotidyl-ribonucleotide-RNA + GMP + diphosphate. It catalyses the reaction a 3'-end 2',3'-cyclophospho-ribonucleotide-RNA + a 5'-end dephospho-ribonucleoside-RNA + GTP + H2O = a ribonucleotidyl-ribonucleotide-RNA + GMP + diphosphate + H(+). Its function is as follows. Catalytic subunit of the tRNA-splicing ligase complex that acts by directly joining spliced tRNA halves to mature-sized tRNAs by incorporating the precursor-derived splice junction phosphate into the mature tRNA as a canonical 3',5'-phosphodiester. May act as an RNA ligase with broad substrate specificity, and may function toward other RNAs. This is RNA-splicing ligase RtcB homolog 1 from Entamoeba dispar (strain ATCC PRA-260 / SAW760).